A 112-amino-acid chain; its full sequence is MRLSLCLLTILVVCCYEANGQTLAGQVCQALQDVTITFLLNPEEELKRELEEFDAPPEAVEANLKVKRCINKIMYGDRLSMGTSLVFIMLKCDVKVWLQINFPRGRWFSEIN.

The N-terminal stretch at M1 to G20 is a signal peptide. A Pyrrolidone carboxylic acid modification is found at Q21.

It belongs to the secretoglobin family. Lipophilin subfamily. As to quaternary structure, prostatein is composed of three different peptides called C1, C2 and C3. These form covalent C1:C3 (F) and C2:C3 (S) heterodimers whose noncovalent association forms tetrameric (C1:C3/C3:C2) prostatein molecules. In terms of processing, linked by three disulfide bonds to C3. Post-translationally, the N-terminus is blocked.

It localises to the secreted. In terms of biological role, part of prostatein which is the major secretory glycoprotein of ventral prostate gland. The polypeptide is Prostatic steroid-binding protein C2 (Psbpc2) (Rattus norvegicus (Rat)).